The primary structure comprises 259 residues: MLPTTSVSPRSPDNGILSPREAARHTAGAKRYKYLRRLFHFKQMDFEFALWQMLYLFTSPQKVYRNFHYRKQTKDQWARDDPAFLVLLSIWLCVSTVGFGFVLDMSFFETFKLLLWVVFIDCVGVGLLIATLMWFVSNKYMVKRQGKDYDVEWGYTFDVHLNAFYPLLVILHFIQLFFINHVILSGWFIGYFVGNTIWLIAIGYYIYITFLGYSALPFLKNTVILLYPFAALALLYVLSLALGWNFTEKLCLFYKYRVR.

The Cytoplasmic segment spans residues 1-82 (MLPTTSVSPR…TKDQWARDDP (82 aa)). A helical membrane pass occupies residues 83 to 103 (AFLVLLSIWLCVSTVGFGFVL). Residues 104-112 (DMSFFETFK) are Lumenal-facing. The helical transmembrane segment at 113–133 (LLLWVVFIDCVGVGLLIATLM) threads the bilayer. Residues 134–158 (WFVSNKYMVKRQGKDYDVEWGYTFD) are Cytoplasmic-facing. Residues 159–179 (VHLNAFYPLLVILHFIQLFFI) form a helical membrane-spanning segment. At 180–181 (NH) the chain is on the lumenal side. Residues 182-202 (VILSGWFIGYFVGNTIWLIAI) form a helical membrane-spanning segment. Residues 203–222 (GYYIYITFLGYSALPFLKNT) are Cytoplasmic-facing. The helical transmembrane segment at 223-243 (VILLYPFAALALLYVLSLALG) threads the bilayer. Residues 244 to 259 (WNFTEKLCLFYKYRVR) are Lumenal-facing.

It belongs to the unc-50 family.

The protein localises to the nucleus inner membrane. Its subcellular location is the golgi apparatus membrane. Its function is as follows. Involved in the cell surface expression of neuronal nicotinic receptors. Binds RNA. This Xenopus laevis (African clawed frog) protein is Protein unc-50 homolog A (unc50-a).